Consider the following 659-residue polypeptide: Endoglucanase A (659 aa).

The catalytic stretch occupies residues 1–500; sequence MLIFETYLIL…SKLPNFPPKE (500 aa). Residue Asp101 is the Nucleophile of the active site. Positions 413 to 433 are disordered; sequence NSPKHPHHRTAHGSWSNQLTN. Active-site residues include His419, Asp457, and Glu466. Residues 501–658 form the CBM3 domain; it reads QVEDEFFVEA…GVLVFGTLPD (158 aa).

It belongs to the glycosyl hydrolase 9 (cellulase E) family.

The protein resides in the secreted. It catalyses the reaction Endohydrolysis of (1-&gt;4)-beta-D-glucosidic linkages in cellulose, lichenin and cereal beta-D-glucans.. Strongly inhibited by ZnCl(2) and by EDTA. Active on carboxymethyl cellulose and carboxymethyl cellulose-RBB but not avicel, xanthan gum, carboxymethyl-curdulan-RBB or carboxymethyl-xylan-RBB. The sequence is that of Endoglucanase A (eglA) from Bacillus pumilus (Bacillus mesentericus).